The sequence spans 238 residues: Large ribosomal subunit protein uL1 (238 aa).

This sequence belongs to the universal ribosomal protein uL1 family. In terms of assembly, part of the 50S ribosomal subunit.

Its function is as follows. Binds directly to 23S rRNA. The L1 stalk is quite mobile in the ribosome, and is involved in E site tRNA release. In terms of biological role, protein L1 is also a translational repressor protein, it controls the translation of the L11 operon by binding to its mRNA. This Saccharopolyspora erythraea (strain ATCC 11635 / DSM 40517 / JCM 4748 / NBRC 13426 / NCIMB 8594 / NRRL 2338) protein is Large ribosomal subunit protein uL1.